A 263-amino-acid chain; its full sequence is Endonuclease 8 (263 aa).

Pro-2 acts as the Schiff-base intermediate with DNA in catalysis. Glu-3 serves as the catalytic Proton donor. The Proton donor; for beta-elimination activity role is filled by Lys-53. Positions 70, 125, and 169 each coordinate DNA. An FPG-type zinc finger spans residues 229-263; sequence KVFHRDGELCERCGGIIEKTTLSSRPFYWCPGCQH. Residue Arg-253 is the Proton donor; for delta-elimination activity of the active site.

It belongs to the FPG family. The cofactor is Zn(2+).

The enzyme catalyses 2'-deoxyribonucleotide-(2'-deoxyribose 5'-phosphate)-2'-deoxyribonucleotide-DNA = a 3'-end 2'-deoxyribonucleotide-(2,3-dehydro-2,3-deoxyribose 5'-phosphate)-DNA + a 5'-end 5'-phospho-2'-deoxyribonucleoside-DNA + H(+). Functionally, involved in base excision repair of DNA damaged by oxidation or by mutagenic agents. Acts as a DNA glycosylase that recognizes and removes damaged bases. Has a preference for oxidized pyrimidines, such as thymine glycol, 5,6-dihydrouracil and 5,6-dihydrothymine. Has AP (apurinic/apyrimidinic) lyase activity and introduces nicks in the DNA strand. Cleaves the DNA backbone by beta-delta elimination to generate a single-strand break at the site of the removed base with both 3'- and 5'-phosphates. The sequence is that of Endonuclease 8 from Escherichia coli (strain SE11).